The following is a 432-amino-acid chain: Adenylosuccinate synthetase (432 aa).

GTP-binding positions include 13 to 19 (GDEGKGK) and 41 to 43 (GHT). Asp14 acts as the Proton acceptor in catalysis. The Mg(2+) site is built by Asp14 and Gly41. IMP is bound by residues 14–17 (DEGK), 39–42 (NAGH), Thr130, Arg144, Gln225, Thr240, and Arg304. His42 functions as the Proton donor in the catalytic mechanism. Residue 300 to 306 (ATTGRSR) participates in substrate binding. Residues Arg306, 332-334 (KLD), and 415-417 (STG) each bind GTP.

It belongs to the adenylosuccinate synthetase family. As to quaternary structure, homodimer. Mg(2+) is required as a cofactor.

The protein localises to the cytoplasm. The catalysed reaction is IMP + L-aspartate + GTP = N(6)-(1,2-dicarboxyethyl)-AMP + GDP + phosphate + 2 H(+). The protein operates within purine metabolism; AMP biosynthesis via de novo pathway; AMP from IMP: step 1/2. Its function is as follows. Plays an important role in the de novo pathway of purine nucleotide biosynthesis. Catalyzes the first committed step in the biosynthesis of AMP from IMP. The sequence is that of Adenylosuccinate synthetase from Marinomonas sp. (strain MWYL1).